A 127-amino-acid chain; its full sequence is uncharacterized protein (127 aa).

A coiled-coil region spans residues 71–126 (FYLREYRRIRRRIKELKNRAKYISKGEIAYNPKIMKEVEALKEKLSEIEKKIEELK).

This is an uncharacterized protein from Aquifex aeolicus (strain VF5).